Here is a 120-residue protein sequence, read N- to C-terminus: Large ribosomal subunit protein bL19 (120 aa).

The protein belongs to the bacterial ribosomal protein bL19 family.

In terms of biological role, this protein is located at the 30S-50S ribosomal subunit interface and may play a role in the structure and function of the aminoacyl-tRNA binding site. The sequence is that of Large ribosomal subunit protein bL19 from Chlorobium limicola (strain DSM 245 / NBRC 103803 / 6330).